We begin with the raw amino-acid sequence, 600 residues long: Elongation factor 4 (600 aa).

In terms of domain architecture, tr-type G spans 4–186; sequence SKIRNFSIIA…AIVEKIPSPS (183 aa). GTP-binding positions include 16–21 and 133–136; these read DHGKST and NKID.

It belongs to the TRAFAC class translation factor GTPase superfamily. Classic translation factor GTPase family. LepA subfamily.

Its subcellular location is the cell membrane. It catalyses the reaction GTP + H2O = GDP + phosphate + H(+). Functionally, required for accurate and efficient protein synthesis under certain stress conditions. May act as a fidelity factor of the translation reaction, by catalyzing a one-codon backward translocation of tRNAs on improperly translocated ribosomes. Back-translocation proceeds from a post-translocation (POST) complex to a pre-translocation (PRE) complex, thus giving elongation factor G a second chance to translocate the tRNAs correctly. Binds to ribosomes in a GTP-dependent manner. The chain is Elongation factor 4 from Mycoplasma mycoides subsp. mycoides SC (strain CCUG 32753 / NCTC 10114 / PG1).